The chain runs to 241 residues: uncharacterized protein (241 aa).

3 disordered regions span residues 19 to 59, 101 to 139, and 152 to 182; these read ERDR…QQLG, VRRPNPSVPSPLPKPPVPSAGSCEPLAPPPTSASGASRS, and RGCRPAPGSAAGWPRSDRRARLPRKASKPCS. The span at 34-48 shows a compositional bias: gly residues; sequence ARGGRGLWTVGGGGS. A compositionally biased stretch (polar residues) spans 49-58; sequence PTETAESQQL. The span at 106-118 shows a compositional bias: pro residues; the sequence is PSVPSPLPKPPVP.

This is an uncharacterized protein from Homo sapiens (Human).